The chain runs to 256 residues: uncharacterized protein (256 aa).

The N-terminal stretch at 1-24 (MIKRVNKLVLGISLLFLVISITAG) is a signal peptide. Cys-25 is lipidated: N-palmitoyl cysteine. Cys-25 carries the S-diacylglycerol cysteine lipid modification.

The protein belongs to the staphylococcal tandem lipoprotein family.

The protein resides in the cell membrane. This is an uncharacterized protein from Staphylococcus aureus (strain MW2).